Reading from the N-terminus, the 1390-residue chain is Hepatocyte growth factor receptor (1390 aa).

Positions 1–24 (MKAPAVLAPGILVLLFTLVQRSNG) are cleaved as a signal peptide. The Extracellular portion of the chain corresponds to 25–932 (ECKEALAKSE…VIVQPDQNFT (908 aa)). The region spanning 27–515 (KEALAKSEMN…TGKKITKIPL (489 aa)) is the Sema domain. Asn45 carries an N-linked (GlcNAc...) asparagine glycan. 4 disulfide bridges follow: Cys95/Cys101, Cys98/Cys160, Cys133/Cys141, and Cys172/Cys175. Asn106 is a glycosylation site (N-linked (GlcNAc...) asparagine). A glycan (N-linked (GlcNAc...) asparagine) is linked at Asn149. Asn202 carries an N-linked (GlcNAc...) asparagine glycan. Disulfide bonds link Cys298–Cys363 and Cys385–Cys397. N-linked (GlcNAc...) asparagine glycosylation is found at Asn399 and Asn405. Disulfide bonds link Cys520–Cys538, Cys526–Cys561, Cys529–Cys545, and Cys541–Cys551. 3 consecutive IPT/TIG domains span residues 563 to 655 (PAIY…FSYV), 657 to 739 (PVIT…FSYR), and 742 to 836 (PIVY…LIYV). A glycan (O-linked (Man) threonine) is linked at Thr582. 2 N-linked (GlcNAc...) asparagine glycosylation sites follow: Asn607 and Asn635. Thr676 and Thr761 each carry an O-linked (Man) threonine glycan. Residues Asn785, Asn879, and Asn930 are each glycosylated (N-linked (GlcNAc...) asparagine). The chain crosses the membrane as a helical span at residues 933 to 955 (GLIAGVVSISIALLLLLGFFLWL). Topologically, residues 956–1390 (KKRKQIKDLG…TRPASFWETS (435 aa)) are cytoplasmic. Residue Ser966 is modified to Phosphoserine. Residue Thr977 is modified to Phosphothreonine. 3 positions are modified to phosphoserine: Ser990, Ser997, and Ser1000. Tyr1003 carries the phosphotyrosine modification. The Protein kinase domain maps to 1078–1345 (VHFNEVIGRG…RISAIFSTFI (268 aa)). Residues 1084 to 1092 (IGRGHFGCV) and Lys1110 contribute to the ATP site. Residue Asp1204 is the Proton acceptor of the active site. The segment at 1212–1390 (LDEKFTVKVA…TRPASFWETS (179 aa)) is interaction with RANBP9. Tyr1230 carries the phosphotyrosine modification. Tyr1234 and Tyr1235 each carry phosphotyrosine; by autocatalysis. Thr1289 bears the Phosphothreonine mark. Residues 1320-1359 (WHPKAEMRPSFSELVSRISAIFSTFIGEHYVHVNATYVNV) form an interaction with MUC20 region. Residues Tyr1349 and Tyr1356 each carry the phosphotyrosine; by autocatalysis modification. Tyr1365 carries the post-translational modification Phosphotyrosine.

Belongs to the protein kinase superfamily. Tyr protein kinase family. As to quaternary structure, heterodimer made of an alpha chain (50 kDa) and a beta chain (145 kDa) which are disulfide linked. Binds PLXNB1. Interacts when phosphorylated with downstream effectors including STAT3, PIK3R1, SRC, PCLG1, GRB2 and GAB1. Interacts with SPSB1, SPSB2 and SPSB4. Interacts with INPP5D/SHIP1. When phosphorylated at Tyr-1356, interacts with INPPL1/SHIP2. Interacts with RANBP9 and RANBP10, as well as SPSB1, SPSB2, SPSB3 and SPSB4. SPSB1 binding occurs in the presence and in the absence of HGF, however HGF treatment has a positive effect on this interaction. Interacts with MUC20; prevents interaction with GRB2 and suppresses hepatocyte growth factor-induced cell proliferation. Interacts with GRB10. Interacts with PTPN1 and PTPN2. Interacts with HSP90AA1 and HSP90AB1; the interaction suppresses MET kinase activity. Interacts with tensin TNS3. Interacts (when phosphorylated) with tensin TNS4 (via SH2 domain); the interaction increases MET protein stability by inhibiting MET endocytosis and subsequent lysosomal degradation. Autophosphorylated in response to ligand binding on Tyr-1234 and Tyr-1235 in the kinase domain leading to further phosphorylation of Tyr-1349 and Tyr-1356 in the C-terminal multifunctional docking site. Dephosphorylated by PTPRJ at Tyr-1349 and Tyr-1365. Dephosphorylated by PTPN1 and PTPN2. Post-translationally, ubiquitinated. Ubiquitination by CBL regulates the receptor stability and activity through proteasomal degradation. In terms of processing, O-mannosylation of IPT/TIG domains by TMEM260 is required for protein maturation. O-mannosylated residues are composed of single mannose glycans that are not elongated or modified.

It localises to the membrane. It carries out the reaction L-tyrosyl-[protein] + ATP = O-phospho-L-tyrosyl-[protein] + ADP + H(+). In its inactive state, the C-terminal tail interacts with the catalytic domain and inhibits the kinase activity. Upon ligand binding, the C-terminal tail is displaced and becomes phosphorylated, thus increasing the kinase activity. In terms of biological role, receptor tyrosine kinase that transduces signals from the extracellular matrix into the cytoplasm by binding to hepatocyte growth factor/HGF ligand. Regulates many physiological processes including proliferation, scattering, morphogenesis and survival. Ligand binding at the cell surface induces autophosphorylation of MET on its intracellular domain that provides docking sites for downstream signaling molecules. Following activation by ligand, interacts with the PI3-kinase subunit PIK3R1, PLCG1, SRC, GRB2, STAT3 or the adapter GAB1. Recruitment of these downstream effectors by MET leads to the activation of several signaling cascades including the RAS-ERK, PI3 kinase-AKT, or PLCgamma-PKC. The RAS-ERK activation is associated with the morphogenetic effects while PI3K/AKT coordinates prosurvival effects. During embryonic development, MET signaling plays a role in gastrulation, development and migration of muscles and neuronal precursors, angiogenesis and kidney formation. In adults, participates in wound healing as well as organ regeneration and tissue remodeling. Also promotes differentiation and proliferation of hematopoietic cells. This Pongo abelii (Sumatran orangutan) protein is Hepatocyte growth factor receptor (MET).